A 171-amino-acid polypeptide reads, in one-letter code: 3-hydroxydecanoyl-[acyl-carrier-protein] dehydratase (171 aa).

Residue histidine 70 is part of the active site.

This sequence belongs to the thioester dehydratase family. FabA subfamily. As to quaternary structure, homodimer.

Its subcellular location is the cytoplasm. The catalysed reaction is a (3R)-hydroxyacyl-[ACP] = a (2E)-enoyl-[ACP] + H2O. It carries out the reaction (3R)-hydroxydecanoyl-[ACP] = (2E)-decenoyl-[ACP] + H2O. The enzyme catalyses (2E)-decenoyl-[ACP] = (3Z)-decenoyl-[ACP]. It participates in lipid metabolism; fatty acid biosynthesis. In terms of biological role, necessary for the introduction of cis unsaturation into fatty acids. Catalyzes the dehydration of (3R)-3-hydroxydecanoyl-ACP to E-(2)-decenoyl-ACP and then its isomerization to Z-(3)-decenoyl-ACP. Can catalyze the dehydratase reaction for beta-hydroxyacyl-ACPs with saturated chain lengths up to 16:0, being most active on intermediate chain length. The protein is 3-hydroxydecanoyl-[acyl-carrier-protein] dehydratase of Pseudomonas fluorescens (strain ATCC BAA-477 / NRRL B-23932 / Pf-5).